The following is a 1384-amino-acid chain: MTSYSFTEKKRIRKDFGKHRSILKVPFLLAIQVDSYRAFLQGDVESSQRKDIGLHGALKSVFPIVSYSGNAALEYVGYKLGEPMFDERECRQRGMSYGAPLRVTVRLVIYDRESSTKAVKYIKEQEVYLGEIPLMTENGTFIVNGTERVIVSQLHRSPGVFFDHDRGKTHSSGKLLYSARIIPCRGSWLDFEFDPKDALFTRIDRRRKLPVSILLRALGYSNEEILGEFFEINTFHINPDKGVQLELVPERLRGEILSFNLTDGGGVIVEAGKRITARHVKQLEASGISALAVPDDYLIGRILSHDVIDATTGELLASANSEVNEDRIVAFRKAGIESVGTLWVNDLDRGAYLSNTLRIDPTRTQLEAQVEIYRMMRPGEPPTKEAAQNLFHNLFFTFDRYDLSMVGRMKFNRRVGRKEVAGEPVLYDKKYFSDRNDEESRRLVSKLGETSDILDVIKGLCEIRNGRGVVDDIDHLGNRRVRSVGEMAENVFRVGLVRVERAVKERLSMAESEGLTPQELINAKPVAAAIKEFFGSSQLSQFMDQNNPLSEVTHKRRLSALGPGGLTRERAGFEVRDVHLSHYGCLCTIETPEGPNIGLINSLAVFARTNQYGFLETPYRKVVEGRVTDEVEYLSAIEENQYVIAQANTLTDDNGQLTESFVPCRFQGESLLKPPSYVHYMDVSPMQTVSVAAALVPFLEHDDANRALMGANMQRQAVPTLRAQKPLVGTGIERTVALDSGVTVNARRGGVIDQVDAGRIVVKVNESEIIGATDAGVDIYGLIKYTRSNQNTCINQRPLVNVGDIIASGDVLADGPSTDIGELALGQNMLIAFMPWNGYNFEDSILLSERVVEEDRYTTIHIEELTCIARDTKLGSEEISADIPNVSEQALNRLDESGVVYIGAEVRAGDILVGKVTPKGESQLTPEEKLLRAIFGEKASDVKDSSLRVPPGMDGTVIDVQVFTRDGIEKDKRAHQIEEYEIKRVKKDFDDQFRILEGAIYARLRSQIVGKVVNSGVDIKKGEVITGPYLDGLKKSDWFALRMKDEVAVEAIDRAQKQIQAYQKEFDQRFSDKRSKITQGDDLAPGVLKMVKVFLAVKRCIQCGDKMAGRHGNKGVISNIVPVEDMPFMEDGTPVDIVLNPLGVPSRMNIGQILEVHLGWAAKGLGHRIQRMLEANAAIADLRKFLNEIYNHDKSLVGERVDLSQFSDDELLNMAKNLTDGVPMASPVFDGASEQEIKRMLDLAELPTGGQTQLYDGHTGEPFDRKTTVGYMHYLKLNHLVDDKMHARSTGPYSLVTQQPLGGKAQFGGQRFGEMEVWALEAYGAAYTLQEMLTVKSDDVQGRNQMYKNIVDGDHQMVAGMPESFNVLVKEIRSLAINIELEDN.

This sequence belongs to the RNA polymerase beta chain family. As to quaternary structure, the RNAP catalytic core consists of 2 alpha, 1 beta, 1 beta' and 1 omega subunit. When a sigma factor is associated with the core the holoenzyme is formed, which can initiate transcription.

The enzyme catalyses RNA(n) + a ribonucleoside 5'-triphosphate = RNA(n+1) + diphosphate. Its function is as follows. DNA-dependent RNA polymerase catalyzes the transcription of DNA into RNA using the four ribonucleoside triphosphates as substrates. This Xylella fastidiosa (strain M12) protein is DNA-directed RNA polymerase subunit beta.